Reading from the N-terminus, the 149-residue chain is Transcription antitermination protein NusB (149 aa).

Belongs to the NusB family.

Its function is as follows. Involved in transcription antitermination. Required for transcription of ribosomal RNA (rRNA) genes. Binds specifically to the boxA antiterminator sequence of the ribosomal RNA (rrn) operons. The sequence is that of Transcription antitermination protein NusB from Chromobacterium violaceum (strain ATCC 12472 / DSM 30191 / JCM 1249 / CCUG 213 / NBRC 12614 / NCIMB 9131 / NCTC 9757 / MK).